We begin with the raw amino-acid sequence, 111 residues long: Large ribosomal subunit protein eL34B (111 aa).

A Phosphotyrosine modification is found at tyrosine 76.

This sequence belongs to the eukaryotic ribosomal protein eL34 family. As to quaternary structure, component of the large ribosomal subunit (LSU). Mature yeast ribosomes consist of a small (40S) and a large (60S) subunit. The 40S small subunit contains 1 molecule of ribosomal RNA (18S rRNA) and at least 33 different proteins. The large 60S subunit contains 3 rRNA molecules (25S, 5.8S and 5S rRNA) and at least 46 different proteins.

The protein resides in the cytoplasm. Its subcellular location is the nucleus. The protein localises to the nucleolus. Functionally, component of the ribosome, a large ribonucleoprotein complex responsible for the synthesis of proteins in the cell. The small ribosomal subunit (SSU) binds messenger RNAs (mRNAs) and translates the encoded message by selecting cognate aminoacyl-transfer RNA (tRNA) molecules. The large subunit (LSU) contains the ribosomal catalytic site termed the peptidyl transferase center (PTC), which catalyzes the formation of peptide bonds, thereby polymerizing the amino acids delivered by tRNAs into a polypeptide chain. The nascent polypeptides leave the ribosome through a tunnel in the LSU and interact with protein factors that function in enzymatic processing, targeting, and the membrane insertion of nascent chains at the exit of the ribosomal tunnel. This is Large ribosomal subunit protein eL34B (rpl3402) from Schizosaccharomyces pombe (strain 972 / ATCC 24843) (Fission yeast).